The primary structure comprises 340 residues: UDP-3-O-acylglucosamine N-acyltransferase (340 aa).

H238 functions as the Proton acceptor in the catalytic mechanism.

The protein belongs to the transferase hexapeptide repeat family. LpxD subfamily. As to quaternary structure, homotrimer.

The enzyme catalyses a UDP-3-O-[(3R)-3-hydroxyacyl]-alpha-D-glucosamine + a (3R)-hydroxyacyl-[ACP] = a UDP-2-N,3-O-bis[(3R)-3-hydroxyacyl]-alpha-D-glucosamine + holo-[ACP] + H(+). It functions in the pathway bacterial outer membrane biogenesis; LPS lipid A biosynthesis. In terms of biological role, catalyzes the N-acylation of UDP-3-O-acylglucosamine using 3-hydroxyacyl-ACP as the acyl donor. Is involved in the biosynthesis of lipid A, a phosphorylated glycolipid that anchors the lipopolysaccharide to the outer membrane of the cell. The chain is UDP-3-O-acylglucosamine N-acyltransferase from Psychromonas ingrahamii (strain DSM 17664 / CCUG 51855 / 37).